A 340-amino-acid chain; its full sequence is tRNA (cytosine(34)-C(5))-methyltransferase, mitochondrial (340 aa).

S-adenosyl-L-methionine-binding positions include 139–145 (CAAPGGK), Glu-162, Asp-193, and Asp-211. Cys-265 serves as the catalytic Nucleophile.

This sequence belongs to the class I-like SAM-binding methyltransferase superfamily. RsmB/NOP family.

It localises to the mitochondrion matrix. It carries out the reaction cytidine(34) in mitochondrial tRNA + S-adenosyl-L-methionine = 5-methylcytidine(34) in mitochondrial tRNA + S-adenosyl-L-homocysteine + H(+). Its function is as follows. Mitochondrial tRNA methyltransferase that mediates methylation of cytosine to 5-methylcytosine (m5C) at position 34 of mt-tRNA(Met). mt-tRNA(Met) methylation at cytosine(34) takes place at the wobble position of the anticodon and initiates the formation of 5-formylcytosine (f(5)c) at this position. mt-tRNA(Met) containing the f(5)c modification at the wobble position enables recognition of the AUA codon in addition to the AUG codon, expanding codon recognition in mitochondrial translation. In Homo sapiens (Human), this protein is tRNA (cytosine(34)-C(5))-methyltransferase, mitochondrial.